A 618-amino-acid polypeptide reads, in one-letter code: Transport protein particle subunit trs85-2 (618 aa).

It belongs to the TRS85 family. Part of the multisubunit TRAPP (transport protein particle) complexes I and II.

It localises to the golgi apparatus. The protein resides in the cis-Golgi network. Component of the TRAPP I and TRAPP II complexes. TRAPP I plays a key role in the late stages of endoplasmic reticulum to Golgi traffic. TRAPP II seems to play a role in intra-Golgi transport. Has a role late in meiosis following DNA replication. This Schizosaccharomyces pombe (strain 972 / ATCC 24843) (Fission yeast) protein is Transport protein particle subunit trs85-2 (trs85-2).